An 865-amino-acid polypeptide reads, in one-letter code: MSRYNVRETEAKWQAAWADAGSFAVTADPAKPKYYVLEMFPYPSGRIHMGHVRNYTMGDVVARFKRAKGFNVLHPMGWDAFGLPAENAALEKGVHPGKWTYENIATMRGQLQTMGLAIDWSREVATCRPEYYRHEQKIFLDFLKAGLAYRKESWVNWDPVDNTVLANEQVVDGRGWRTGALVEKRKLSQWFLKITHFADDLLEALKGLERWPDKVRTMQENWIGRSTGCRFFFRMSDGHPDLEVFTTRPDTLYGASFVAISPNHPLAATLAAGNPALADFIAECNRTSTSEADIETAEKKGFATGVTAEHPFVPGWTLPVYVANFVLMEYGTGAIFGCPAHDQRDLDFARKYGLPVKPVVIPEGQDPAAFAVADEAYTGPGVLRNSDFLDGLGVEEAKAAAIRRIEEAGRGQGTTMYRLRDWGVSRQRYWGCPIPVIHCPKCGAVPVPEAQLPVTLPDDVTFDAPGNPLARHPTWKHVACPCCGGAAERETDTFDTFIESSWYFLRFADPRNGTLAFDPELVKYWLPVDQYIGGVEHAVLHLLYARFWTRALAHCGYLDLAEPFAGLFTQGMVTHATYQGTDGKWLFPAEVEFREGAMVKSDDGTAVTVGPIIKMSKSKKNVVDPQQIIESYGADAARLFMMSDSPPDRDLEWTTAGIDGAWRYINRLWRLVTEPGFDLPAPGTPAPASFGEEATAIRRLAHKAAQQIGEDIEGFRFNSSVARLRSFSNGVQDAFAKLAAKAAAGTAPAADEAWAAREALEMLARMVEPMMPHLAHEMWVELGHAGLLLDRPWPAVDAALVVEDTVTVAVQVNGKLRATINLRRDAGNEEAQAAALADPAVQKAVEGKPLRKVVVVPNRIVNVVV.

A 'HIGH' region motif is present at residues 41–51 (PYPSGRIHMGH). The 'KMSKS' region signature appears at 614–618 (KMSKS). Lysine 617 contributes to the ATP binding site.

The protein belongs to the class-I aminoacyl-tRNA synthetase family.

It is found in the cytoplasm. It catalyses the reaction tRNA(Leu) + L-leucine + ATP = L-leucyl-tRNA(Leu) + AMP + diphosphate. The protein is Leucine--tRNA ligase of Rhodospirillum centenum (strain ATCC 51521 / SW).